The primary structure comprises 401 residues: Multidrug resistance protein MdtH (401 aa).

Helical transmembrane passes span 13 to 33, 34 to 54, 88 to 108, 139 to 159, 164 to 184, 211 to 231, 248 to 268, 275 to 295, 298 to 318, 341 to 361, and 366 to 386; these read YFLIIDNMFVVIGFYAVFPLI, SIHFVEQLGWTAFLVGFALGL, IGFIIMSLAHTPTLLCAACIL, ILMLEDSICAIIGITLGSWLL, FQLVCLTGAILFFIAGMFNAW, FIIYTLTLSGYYILSAQVMLM, YIYITEAILSLLLIIPITYWM, ETRLMLGLVIMIISLSPIGSV, LYELLILISLFYIGSIVAEPA, LSLALGGTLGYSGGGWLYDLG, and FYQLPWIALSIIGTITVLILY.

Belongs to the major facilitator superfamily. DHA1 family. MdtH (TC 2.A.1.2.21) subfamily.

It is found in the cell inner membrane. The chain is Multidrug resistance protein MdtH from Blochmanniella floridana.